The following is a 325-amino-acid chain: Lipoyl synthase (325 aa).

The interval 1-31 is disordered; it reads MASDSDLLDTKPAETRHPEKAHRPDQPTLRK. A compositionally biased stretch (basic and acidic residues) spans 8-31; that stretch reads LDTKPAETRHPEKAHRPDQPTLRK. [4Fe-4S] cluster is bound by residues C61, C66, C72, C87, C91, C94, and S300. A Radical SAM core domain is found at 73–289; it reads WAKKHATFMI…AEIGRAKGFL (217 aa).

The protein belongs to the radical SAM superfamily. Lipoyl synthase family. It depends on [4Fe-4S] cluster as a cofactor.

The protein resides in the cytoplasm. It carries out the reaction [[Fe-S] cluster scaffold protein carrying a second [4Fe-4S](2+) cluster] + N(6)-octanoyl-L-lysyl-[protein] + 2 oxidized [2Fe-2S]-[ferredoxin] + 2 S-adenosyl-L-methionine + 4 H(+) = [[Fe-S] cluster scaffold protein] + N(6)-[(R)-dihydrolipoyl]-L-lysyl-[protein] + 4 Fe(3+) + 2 hydrogen sulfide + 2 5'-deoxyadenosine + 2 L-methionine + 2 reduced [2Fe-2S]-[ferredoxin]. It participates in protein modification; protein lipoylation via endogenous pathway; protein N(6)-(lipoyl)lysine from octanoyl-[acyl-carrier-protein]: step 2/2. Its function is as follows. Catalyzes the radical-mediated insertion of two sulfur atoms into the C-6 and C-8 positions of the octanoyl moiety bound to the lipoyl domains of lipoate-dependent enzymes, thereby converting the octanoylated domains into lipoylated derivatives. This is Lipoyl synthase from Methylocella silvestris (strain DSM 15510 / CIP 108128 / LMG 27833 / NCIMB 13906 / BL2).